The primary structure comprises 248 residues: MNQTNFGFKKVDYTKKQGLVNNVFSNVADKYDLMNDLMSLGLHRLWKDEFIRQIPNLNSHILDVASGSGDIALKLAKKARDRVNNISLTLSDINEEMLKQAKKKAIDLNLFQNLKFTVASAEELPFPDDSFDYYTIAFGIRNVPDINKALKEACRVLKPMGKFICLEFSKVKEGYIKDFYKFYSFNIIPSIGQMIAGNKEAYEYLVESIDLFPSQDEFRIMIKDAGFEEVGYKNLSGGIVAIHSAYIQ.

Residues serine 68 and aspartate 92 each coordinate S-adenosyl-L-methionine.

Belongs to the class I-like SAM-binding methyltransferase superfamily. MenG/UbiE family.

It carries out the reaction a 2-demethylmenaquinol + S-adenosyl-L-methionine = a menaquinol + S-adenosyl-L-homocysteine + H(+). It catalyses the reaction a 2-methoxy-6-(all-trans-polyprenyl)benzene-1,4-diol + S-adenosyl-L-methionine = a 5-methoxy-2-methyl-3-(all-trans-polyprenyl)benzene-1,4-diol + S-adenosyl-L-homocysteine + H(+). It participates in quinol/quinone metabolism; menaquinone biosynthesis; menaquinol from 1,4-dihydroxy-2-naphthoate: step 2/2. It functions in the pathway cofactor biosynthesis; ubiquinone biosynthesis. In terms of biological role, methyltransferase required for the conversion of demethylmenaquinol (DMKH2) to menaquinol (MKH2) and the conversion of 2-polyprenyl-6-methoxy-1,4-benzoquinol (DDMQH2) to 2-polyprenyl-3-methyl-6-methoxy-1,4-benzoquinol (DMQH2). This Rickettsia conorii (strain ATCC VR-613 / Malish 7) protein is Ubiquinone/menaquinone biosynthesis C-methyltransferase UbiE.